The following is a 201-amino-acid chain: Large ribosomal subunit protein uL4 (201 aa).

Residues 45-71 (AQKTRAEVTGSGKKPWRQKGTGRARAG) are disordered.

Belongs to the universal ribosomal protein uL4 family. In terms of assembly, part of the 50S ribosomal subunit.

One of the primary rRNA binding proteins, this protein initially binds near the 5'-end of the 23S rRNA. It is important during the early stages of 50S assembly. It makes multiple contacts with different domains of the 23S rRNA in the assembled 50S subunit and ribosome. In terms of biological role, forms part of the polypeptide exit tunnel. This is Large ribosomal subunit protein uL4 from Shewanella loihica (strain ATCC BAA-1088 / PV-4).